The following is a 529-amino-acid chain: UDP-glucuronosyltransferase 2B28 (529 aa).

The first 24 residues, 1 to 24 (MALKWTSVLLLIHLGCYFSSGSCG), serve as a signal peptide directing secretion. K135 carries the post-translational modification N6-succinyllysine. N315 is a glycosylation site (N-linked (GlcNAc...) asparagine). Residues 495 to 517 (GFLLACVATVIFVVTKFCLFCFW) form a helical membrane-spanning segment.

Belongs to the UDP-glycosyltransferase family. In terms of tissue distribution, expressed in the liver, breast and kidney.

The protein resides in the endoplasmic reticulum membrane. The protein localises to the cytoplasm. It localises to the perinuclear region. The catalysed reaction is glucuronate acceptor + UDP-alpha-D-glucuronate = acceptor beta-D-glucuronoside + UDP + H(+). Functionally, UDP-glucuronosyltransferase (UGT) that catalyzes phase II biotransformation reactions in which lipophilic substrates are conjugated with glucuronic acid to increase the metabolite's water solubility, thereby facilitating excretion into either the urine or bile. Essential for the elimination and detoxification of drugs, xenobiotics and endogenous compounds. Catalyzes the glucuronidation of endogenous steroid hormones such as androgens (androsterone, 3alpha-androstanediol) and estrogens (estradiol, estrone). Catalyzes the glucuronidation of bile acid substrates, which are natural detergents for dietary lipids absorption. Displays glucuronidation activity toward the phenolic compounds eugenol. In terms of biological role, lack UDP-glucuronosyltransferase (UGT) activity. The polypeptide is UDP-glucuronosyltransferase 2B28 (Homo sapiens (Human)).